Here is a 232-residue protein sequence, read N- to C-terminus: Protein G1-like3 (232 aa).

2 disordered regions span residues 20 to 77 (AGLL…YEAQ) and 189 to 232 (ARAR…GAAC). Positions 38-53 (AGGGGGGGGDGAGGSS) are enriched in gly residues. In terms of domain architecture, ALOG spans 73 to 200 (RYEAQKRRDW…ARGVSYEKKK (128 aa)). The Nuclear localization signal motif lies at 198–202 (KKKRK). A compositionally biased stretch (pro residues) spans 216 to 232 (PHPPPPPPPPPSAGAAC).

The protein belongs to the plant homeotic and developmental regulators ALOG protein family.

It is found in the nucleus. Its function is as follows. Probable transcription regulator that acts as a developmental regulator by promoting cell growth in response to light. The chain is Protein G1-like3 from Oryza sativa subsp. indica (Rice).